The following is a 228-amino-acid chain: uncharacterized protein (228 aa).

Positions 1–34 are disordered; that stretch reads MPRDTKPYSRPANAPRPGVKTERSNQFKAASTKY.

This is an uncharacterized protein from Orgyia pseudotsugata (Douglas-fir tussock moth).